A 303-amino-acid polypeptide reads, in one-letter code: Acetaldehyde dehydrogenase (303 aa).

The Acyl-thioester intermediate role is filled by C131. NAD(+)-binding positions include 162 to 170 (SVGPGTRAN) and N273.

Belongs to the acetaldehyde dehydrogenase family.

It catalyses the reaction acetaldehyde + NAD(+) + CoA = acetyl-CoA + NADH + H(+). The sequence is that of Acetaldehyde dehydrogenase from Marinomonas sp. (strain MWYL1).